Reading from the N-terminus, the 308-residue chain is Aspartate carbamoyltransferase catalytic subunit (308 aa).

Residues R57 and T58 each contribute to the carbamoyl phosphate site. K86 is an L-aspartate binding site. Positions 107, 135, and 138 each coordinate carbamoyl phosphate. 2 residues coordinate L-aspartate: R168 and R229. Positions 268 and 269 each coordinate carbamoyl phosphate.

Belongs to the aspartate/ornithine carbamoyltransferase superfamily. ATCase family. In terms of assembly, heterooligomer of catalytic and regulatory chains.

The enzyme catalyses carbamoyl phosphate + L-aspartate = N-carbamoyl-L-aspartate + phosphate + H(+). It participates in pyrimidine metabolism; UMP biosynthesis via de novo pathway; (S)-dihydroorotate from bicarbonate: step 2/3. In terms of biological role, catalyzes the condensation of carbamoyl phosphate and aspartate to form carbamoyl aspartate and inorganic phosphate, the committed step in the de novo pyrimidine nucleotide biosynthesis pathway. This is Aspartate carbamoyltransferase catalytic subunit from Pyrococcus horikoshii (strain ATCC 700860 / DSM 12428 / JCM 9974 / NBRC 100139 / OT-3).